A 321-amino-acid polypeptide reads, in one-letter code: MRSHRSVKVSLVGAGNIGGTLAYMLGVAGICQELVFVDVMDGVPRGKLLDIGHALAISGVDITAVGGSDYAAIEGSDAIVVTAGLPRKEGMSREDLLMANAAVIKGVAENIRKYSPDAFVIVVTNPLDAMVWYMHQCSGLPVNKVVGMAGVLDSARFSFFLAKHMSVSVSSVSSVVLGGHGDLMLPLLKYSTVGGVSVSDLISCGRLSSEDVHAIIERTRKGGEEIVKLLKSGSAYYAPAASCMNMLESYLFDKRCVIPCSVGLDGKYGVNGGLFVGVPAVIGKNGVEEVIEYVLSQEEREIFEKSVGLISNSVKIISEQK.

Residues 13 to 18 and Asp38 each bind NAD(+); that span reads GAGNIG. Residues Arg87 and Arg93 each contribute to the substrate site. NAD(+)-binding positions include Asn100 and 123–125; that span reads VTN. 2 residues coordinate substrate: Asn125 and Arg156. His180 serves as the catalytic Proton acceptor.

This sequence belongs to the LDH/MDH superfamily. MDH type 3 family.

It catalyses the reaction (S)-malate + NAD(+) = oxaloacetate + NADH + H(+). In terms of biological role, catalyzes the reversible oxidation of malate to oxaloacetate. The polypeptide is Malate dehydrogenase (Anaplasma phagocytophilum (strain HZ)).